We begin with the raw amino-acid sequence, 250 residues long: Cyclopentanol dehydrogenase (250 aa).

Positions 18, 37, 63, 64, 90, 155, 159, 188, 190, and 193 each coordinate NAD(+). Tyr155 serves as the catalytic Proton acceptor.

Belongs to the short-chain dehydrogenases/reductases (SDR) family.

It catalyses the reaction cyclopentanol + NAD(+) = cyclopentanone + NADH + H(+). The enzyme catalyses cyclohexanol + NAD(+) = cyclohexanone + NADH + H(+). The protein operates within alcohol metabolism; cyclopentanol degradation; 5-valerolactone from cyclopentanol: step 1/2. In terms of biological role, catalyzes the oxidation of cyclopentanol to cyclopentanone and cyclohexanol to cyclohexanone. The activity toward cyclohexanol is 60% that of cyclopentanol. The polypeptide is Cyclopentanol dehydrogenase (Comamonas sp. (strain NCIMB 9872)).